The chain runs to 291 residues: Pirin-like protein (291 aa).

Belongs to the pirin family.

The protein resides in the nucleus. The protein is Pirin-like protein of Solanum lycopersicum (Tomato).